Consider the following 247-residue polypeptide: Carboxy-S-adenosyl-L-methionine synthase (247 aa).

Residues Tyr39, 64–66 (GCS), 89–90 (DN), 117–118 (DI), Asn132, and Arg199 contribute to the S-adenosyl-L-methionine site.

Belongs to the class I-like SAM-binding methyltransferase superfamily. Cx-SAM synthase family. As to quaternary structure, homodimer.

The catalysed reaction is prephenate + S-adenosyl-L-methionine = carboxy-S-adenosyl-L-methionine + 3-phenylpyruvate + H2O. Its function is as follows. Catalyzes the conversion of S-adenosyl-L-methionine (SAM) to carboxy-S-adenosyl-L-methionine (Cx-SAM). The chain is Carboxy-S-adenosyl-L-methionine synthase from Shigella boydii serotype 4 (strain Sb227).